The chain runs to 409 residues: Elongation factor Tu, chloroplastic (409 aa).

In terms of domain architecture, tr-type G spans 10–214; sequence KPHVNIGTIG…AVDEYIPTPE (205 aa). The interval 19–26 is G1; it reads GHVDHGKT. Position 19 to 26 (19 to 26) interacts with GTP; that stretch reads GHVDHGKT. Mg(2+) is bound at residue Thr-26. The segment at 60 to 64 is G2; the sequence is GITIN. Residues 81–84 are G3; it reads DCPG. Residues 81 to 85 and 136 to 139 each bind GTP; these read DCPGH and NKED. The G4 stretch occupies residues 136-139; sequence NKED. The tract at residues 174-176 is G5; that stretch reads SAL.

The protein belongs to the TRAFAC class translation factor GTPase superfamily. Classic translation factor GTPase family. EF-Tu/EF-1A subfamily.

Its subcellular location is the plastid. It is found in the chloroplast. It carries out the reaction GTP + H2O = GDP + phosphate + H(+). Functionally, GTP hydrolase that promotes the GTP-dependent binding of aminoacyl-tRNA to the A-site of ribosomes during protein biosynthesis. In Phaeodactylum tricornutum (strain CCAP 1055/1), this protein is Elongation factor Tu, chloroplastic (tufA).